Reading from the N-terminus, the 122-residue chain is Large ribosomal subunit protein uL14 (122 aa).

It belongs to the universal ribosomal protein uL14 family. Part of the 50S ribosomal subunit. Forms a cluster with proteins L3 and L19. In the 70S ribosome, L14 and L19 interact and together make contacts with the 16S rRNA in bridges B5 and B8.

Its function is as follows. Binds to 23S rRNA. Forms part of two intersubunit bridges in the 70S ribosome. The polypeptide is Large ribosomal subunit protein uL14 (Bordetella avium (strain 197N)).